The primary structure comprises 446 residues: Glucose transporter GlcP (446 aa).

The Cytoplasmic segment spans residues methionine 1–tyrosine 6. The helical transmembrane segment at leucine 7–leucine 31 threads the bilayer. The Extracellular portion of the chain corresponds to phenylalanine 32–proline 38. Residues leucine 39–proline 64 traverse the membrane as a helical segment. The Cytoplasmic segment spans residues leucine 65 to glycine 70. Residues arginine 71 to alanine 90 traverse the membrane as a helical segment. At alanine 91 to asparagine 94 the chain is on the extracellular side. A helical transmembrane segment spans residues leucine 95–glutamate 122. Residues methionine 123–arginine 129 lie on the Cytoplasmic side of the membrane. The helical transmembrane segment at glycine 130–tyrosine 152 threads the bilayer. Residues alanine 153–phenylalanine 154 are Extracellular-facing. The helical transmembrane segment at alanine 155–phenylalanine 180 threads the bilayer. At methionine 181 to proline 234 the chain is on the cytoplasmic side. A helical transmembrane segment spans residues tryptophan 235–alanine 269. Residues glycine 270–glycine 272 are Extracellular-facing. The chain crosses the membrane as a helical span at residues glutamate 273 to isoleucine 295. The Cytoplasmic segment spans residues phenylalanine 296 to arginine 303. A helical transmembrane segment spans residues lysine 304–leucine 324. Residues isoleucine 325–glycine 329 are Extracellular-facing. A helical membrane pass occupies residues isoleucine 330–leucine 363. The Cytoplasmic segment spans residues phenylalanine 364–glycine 370. Residues alanine 371 to serine 399 form a helical membrane-spanning segment. The Extracellular segment spans residues threonine 400–glutamate 401. A helical membrane pass occupies residues tryptophan 402–lysine 420. Topologically, residues phenylalanine 421–glutamate 446 are cytoplasmic.

The protein belongs to the major facilitator superfamily. Sugar transporter (TC 2.A.1.1) family.

It is found in the cell membrane. Inhibited by carbonyl cyanide m-chlorophenylhydrazone (CCCP) and by the human glucose transport inhibitors cytochalasin B, phloretin, and forskolin. In terms of biological role, transporter highly specific for glucose uptake. The protein is Glucose transporter GlcP of Staphylococcus epidermidis (strain ATCC 12228 / FDA PCI 1200).